The primary structure comprises 619 residues: Dihydroxy-acid dehydratase (619 aa).

D81 is a Mg(2+) binding site. [2Fe-2S] cluster is bound at residue C122. Mg(2+) is bound by residues D123 and K124. K124 is modified (N6-carboxylysine). C195 is a [2Fe-2S] cluster binding site. E494 is a binding site for Mg(2+). S520 serves as the catalytic Proton acceptor.

It belongs to the IlvD/Edd family. As to quaternary structure, homodimer. It depends on [2Fe-2S] cluster as a cofactor. Mg(2+) serves as cofactor.

The enzyme catalyses (2R)-2,3-dihydroxy-3-methylbutanoate = 3-methyl-2-oxobutanoate + H2O. The catalysed reaction is (2R,3R)-2,3-dihydroxy-3-methylpentanoate = (S)-3-methyl-2-oxopentanoate + H2O. It participates in amino-acid biosynthesis; L-isoleucine biosynthesis; L-isoleucine from 2-oxobutanoate: step 3/4. It functions in the pathway amino-acid biosynthesis; L-valine biosynthesis; L-valine from pyruvate: step 3/4. Functions in the biosynthesis of branched-chain amino acids. Catalyzes the dehydration of (2R,3R)-2,3-dihydroxy-3-methylpentanoate (2,3-dihydroxy-3-methylvalerate) into 2-oxo-3-methylpentanoate (2-oxo-3-methylvalerate) and of (2R)-2,3-dihydroxy-3-methylbutanoate (2,3-dihydroxyisovalerate) into 2-oxo-3-methylbutanoate (2-oxoisovalerate), the penultimate precursor to L-isoleucine and L-valine, respectively. This Shewanella putrefaciens (strain CN-32 / ATCC BAA-453) protein is Dihydroxy-acid dehydratase.